The chain runs to 374 residues: Flagellar P-ring protein (374 aa).

The N-terminal stretch at Met1–Ala29 is a signal peptide. The segment covering Glu296 to Thr311 has biased composition (polar residues). The tract at residues Glu296–Arg316 is disordered.

It belongs to the FlgI family. As to quaternary structure, the basal body constitutes a major portion of the flagellar organelle and consists of four rings (L,P,S, and M) mounted on a central rod.

Its subcellular location is the periplasm. It is found in the bacterial flagellum basal body. Assembles around the rod to form the L-ring and probably protects the motor/basal body from shearing forces during rotation. This is Flagellar P-ring protein from Nitrobacter winogradskyi (strain ATCC 25391 / DSM 10237 / CIP 104748 / NCIMB 11846 / Nb-255).